Here is a 443-residue protein sequence, read N- to C-terminus: Methylenetetrahydrofolate--tRNA-(uracil-5-)-methyltransferase TrmFO (443 aa).

8–13 (GAGLAG) is a binding site for FAD.

Belongs to the MnmG family. TrmFO subfamily. FAD is required as a cofactor.

It localises to the cytoplasm. It catalyses the reaction uridine(54) in tRNA + (6R)-5,10-methylene-5,6,7,8-tetrahydrofolate + NADH + H(+) = 5-methyluridine(54) in tRNA + (6S)-5,6,7,8-tetrahydrofolate + NAD(+). The enzyme catalyses uridine(54) in tRNA + (6R)-5,10-methylene-5,6,7,8-tetrahydrofolate + NADPH + H(+) = 5-methyluridine(54) in tRNA + (6S)-5,6,7,8-tetrahydrofolate + NADP(+). Catalyzes the folate-dependent formation of 5-methyl-uridine at position 54 (M-5-U54) in all tRNAs. In Thermus thermophilus (strain ATCC 27634 / DSM 579 / HB8), this protein is Methylenetetrahydrofolate--tRNA-(uracil-5-)-methyltransferase TrmFO.